Here is a 320-residue protein sequence, read N- to C-terminus: MRARLLIPILFSVFILSACGTLTGIPSHGGGKRFAVEQELVAASARAAVKDMDLQALHGRKVALYIATMGDQGSGSLTGGRYSIDALIRGEYINSPAVRTDYTYPRYETTAETTSGGLTGLTTSLSTLNAPALSRTQSDGSGSRSSLGLNIGGMGDYRNETLTTNPRDTAFLSHLVQTVFFLRGIDVVSPANADTDVFINIDVFGTIRNRTEMHLYNAETLKAQTKLEYFAVDRTNKKLLIKPKTNAFEAAYKENYALWMGPYKVSKGIKPTEGLMVDFSDIQPYGNHTGNSAPSVEADNSHEGYGYSDEAVRQHRQGQP.

An N-terminal signal peptide occupies residues 1 to 18 (MRARLLIPILFSVFILSA). A lipid anchor (N-palmitoyl cysteine) is attached at Cys-19. The S-diacylglycerol cysteine moiety is linked to residue Cys-19. Residues 287–320 (NHTGNSAPSVEADNSHEGYGYSDEAVRQHRQGQP) form a disordered region.

This sequence belongs to the MafA family.

The protein resides in the cell outer membrane. In Neisseria gonorrhoeae (strain ATCC 700825 / FA 1090), this protein is Adhesin MafA 1/4 (mafA1).